A 225-amino-acid polypeptide reads, in one-letter code: Perlwapin-like protein (225 aa).

Positions 1–19 (MNHLWLFIVTVSCIYLVYG) are cleaved as a signal peptide. 4 cysteine pairs are disulfide-bonded: Cys-27–Cys-57, Cys-36–Cys-61, Cys-43–Cys-56, and Cys-49–Cys-65. A WAP 1; atypical domain is found at 27-68 (CKVKFMGTACPLGRLVCEEDGDCLGVNQVCCYDGCGTTCHNK). An N-linked (GlcNAc...) asparagine glycan is attached at Asn-67. The 53-residue stretch at 117 to 169 (IIPSPELLCPVVTVRYAFCRFSTYTPCHTSNDCAVPGMKCCPDVCGKRCKFPI) folds into the WAP 2 domain. Intrachain disulfides connect Cys-125–Cys-157, Cys-135–Cys-161, Cys-143–Cys-156, and Cys-149–Cys-165. Asn-170 carries an N-linked (GlcNAc...) asparagine glycan. The interval 176–225 (QFQQTPLKPTVPLPQYQQTPLQPTVPSSQPPLQPTVPSPQSYNYKGACST) is disordered. A compositionally biased stretch (low complexity) spans 188–201 (LPQYQQTPLQPTVP). Pro residues predominate over residues 203 to 212 (SQPPLQPTVP). A compositionally biased stretch (polar residues) spans 213-225 (SPQSYNYKGACST).

As to expression, component of the acid-soluble organic matrix of calcified layers of the shell (at protein level).

The protein resides in the secreted. In Lottia gigantea (Giant owl limpet), this protein is Perlwapin-like protein.